The following is a 127-amino-acid chain: MVELNFEKSVDGLLPAVVQDYVSGEVLMLAYINKLSWEKTLETGQAHYWSRSRNSLWLKGESSGNVQVIHDILVDCDSDTVVFKVDQIGDAACHTGHRSCFFRRVHQGELVVEGKPLFDPAQVYGSK.

Residue Asp75 coordinates Mg(2+). A Zn(2+)-binding site is contributed by Cys76. The Mg(2+) site is built by Asp77 and Asp79. Positions 93 and 100 each coordinate Zn(2+).

The protein belongs to the PRA-CH family. As to quaternary structure, homodimer. Mg(2+) serves as cofactor. Requires Zn(2+) as cofactor.

The protein localises to the cytoplasm. The catalysed reaction is 1-(5-phospho-beta-D-ribosyl)-5'-AMP + H2O = 1-(5-phospho-beta-D-ribosyl)-5-[(5-phospho-beta-D-ribosylamino)methylideneamino]imidazole-4-carboxamide. Its pathway is amino-acid biosynthesis; L-histidine biosynthesis; L-histidine from 5-phospho-alpha-D-ribose 1-diphosphate: step 3/9. Its function is as follows. Catalyzes the hydrolysis of the adenine ring of phosphoribosyl-AMP. This is Phosphoribosyl-AMP cyclohydrolase from Desulfotalea psychrophila (strain LSv54 / DSM 12343).